A 188-amino-acid polypeptide reads, in one-letter code: Phosphoheptose isomerase (188 aa).

The 156-residue stretch at 33–188 folds into the SIS domain; that stretch reads VTASLRAGGK…CGLVEDALCS (156 aa). 48–50 serves as a coordination point for substrate; it reads NGG. Zn(2+) contacts are provided by H57 and E61. Substrate-binding positions include E61, 90–91, 116–118, S121, and Q168; these read ND and STS. Zn(2+)-binding residues include Q168 and H176.

This sequence belongs to the SIS family. GmhA subfamily. As to quaternary structure, homotetramer. The cofactor is Zn(2+).

The protein resides in the cytoplasm. The catalysed reaction is 2 D-sedoheptulose 7-phosphate = D-glycero-alpha-D-manno-heptose 7-phosphate + D-glycero-beta-D-manno-heptose 7-phosphate. It participates in carbohydrate biosynthesis; D-glycero-D-manno-heptose 7-phosphate biosynthesis; D-glycero-alpha-D-manno-heptose 7-phosphate and D-glycero-beta-D-manno-heptose 7-phosphate from sedoheptulose 7-phosphate: step 1/1. In terms of biological role, catalyzes the isomerization of sedoheptulose 7-phosphate in D-glycero-D-manno-heptose 7-phosphate. The chain is Phosphoheptose isomerase from Rhodospirillum rubrum (strain ATCC 11170 / ATH 1.1.1 / DSM 467 / LMG 4362 / NCIMB 8255 / S1).